We begin with the raw amino-acid sequence, 258 residues long: CDP-diacylglycerol pyrophosphatase (258 aa).

A helical transmembrane segment spans residues 10 to 30 (YLLTLLILIILAAGLIYKLRF).

This sequence belongs to the Cdh family.

The protein resides in the cell inner membrane. The enzyme catalyses a CDP-1,2-diacyl-sn-glycerol + H2O = a 1,2-diacyl-sn-glycero-3-phosphate + CMP + 2 H(+). The protein operates within phospholipid metabolism; CDP-diacylglycerol degradation; phosphatidate from CDP-diacylglycerol: step 1/1. This chain is CDP-diacylglycerol pyrophosphatase (cdh), found in Yersinia pestis.